Reading from the N-terminus, the 105-residue chain is Small ribosomal subunit protein uS10 (105 aa).

This sequence belongs to the universal ribosomal protein uS10 family. Part of the 30S ribosomal subunit.

Functionally, involved in the binding of tRNA to the ribosomes. The sequence is that of Small ribosomal subunit protein uS10 from Thermus thermophilus (strain ATCC BAA-163 / DSM 7039 / HB27).